We begin with the raw amino-acid sequence, 214 residues long: Endothelin-3 (214 aa).

An N-terminal signal peptide occupies residues 1–16 (MEPGLWLLLGLTVTSA). The propeptide occupies 17–94 (AGLVPCPQSG…DKGLPAHHRP (78 aa)). A disordered region spans residues 24–91 (QSGDSGRASV…KQEDKGLPAH (68 aa)). A compositionally biased stretch (polar residues) spans 25–35 (SGDSGRASVSQ). Cystine bridges form between cysteine 97/cysteine 111 and cysteine 99/cysteine 107. Positions 118-214 (INTPEQTVPY…MSRTDKAHRP (97 aa)) are excised as a propeptide. The endothelin-like stretch occupies residues 159 to 173 (CTCMGADDKACAHFC). The segment at 183–214 (SGRAERPAAEEMRETGGPRQRLMSRTDKAHRP) is disordered. Residues 185–198 (RAERPAAEEMRETG) are compositionally biased toward basic and acidic residues.

It belongs to the endothelin/sarafotoxin family.

It is found in the secreted. Endothelins are endothelium-derived vasoconstrictor peptides. This Mus musculus (Mouse) protein is Endothelin-3 (Edn3).